A 214-amino-acid chain; its full sequence is Small ribosomal subunit protein uS5 (214 aa).

An S5 DRBM domain is found at 54 to 117; it reads LKYEVMDIKI…KNAKMNIIPV (64 aa).

Belongs to the universal ribosomal protein uS5 family. As to quaternary structure, part of the 30S ribosomal subunit. Contacts protein S4.

In terms of biological role, with S4 and S12 plays an important role in translational accuracy. The polypeptide is Small ribosomal subunit protein uS5 (Sulfurisphaera tokodaii (strain DSM 16993 / JCM 10545 / NBRC 100140 / 7) (Sulfolobus tokodaii)).